We begin with the raw amino-acid sequence, 130 residues long: Small ribosomal subunit protein uS9 (130 aa).

Belongs to the universal ribosomal protein uS9 family.

This Saccharophagus degradans (strain 2-40 / ATCC 43961 / DSM 17024) protein is Small ribosomal subunit protein uS9.